We begin with the raw amino-acid sequence, 562 residues long: Urocanate hydratase (562 aa).

NAD(+) contacts are provided by residues 52-53, Gln-130, 176-178, Glu-196, Arg-201, 242-243, 263-267, 273-274, and Tyr-322; these read GG, GMG, NA, QTSAH, and YL. The active site involves Cys-410. Gly-492 serves as a coordination point for NAD(+).

Belongs to the urocanase family. It depends on NAD(+) as a cofactor.

It is found in the cytoplasm. The catalysed reaction is 4-imidazolone-5-propanoate = trans-urocanate + H2O. It functions in the pathway amino-acid degradation; L-histidine degradation into L-glutamate; N-formimidoyl-L-glutamate from L-histidine: step 2/3. Its function is as follows. Catalyzes the conversion of urocanate to 4-imidazolone-5-propionate. This chain is Urocanate hydratase, found in Klebsiella pneumoniae subsp. pneumoniae (strain ATCC 700721 / MGH 78578).